A 335-amino-acid chain; its full sequence is Vitamin B12 import system permease protein BtuC (335 aa).

9 helical membrane passes run 22 to 42 (LLLL…AGDV), 67 to 87 (LAVM…QSLF), 94 to 114 (PGLL…VLLG), 117 to 137 (LLPV…MTFL), 153 to 173 (LLVG…AVYF), 200 to 220 (LVLA…ALNF), 243 to 263 (VLAI…IGFV), 281 to 301 (YLLP…DVVA), and 308 to 328 (AELP…IWLL).

It belongs to the binding-protein-dependent transport system permease family. FecCD subfamily. As to quaternary structure, the complex is composed of two ATP-binding proteins (BtuD), two transmembrane proteins (BtuC) and a solute-binding protein (BtuF).

The protein localises to the cell inner membrane. Its function is as follows. Part of the ABC transporter complex BtuCDF involved in vitamin B12 import. Involved in the translocation of the substrate across the membrane. In Serratia proteamaculans (strain 568), this protein is Vitamin B12 import system permease protein BtuC.